Reading from the N-terminus, the 151-residue chain is Protein-export protein SecB (151 aa).

The protein belongs to the SecB family. Homotetramer, a dimer of dimers. One homotetramer interacts with 1 SecA dimer.

It is found in the cytoplasm. In terms of biological role, one of the proteins required for the normal export of preproteins out of the cell cytoplasm. It is a molecular chaperone that binds to a subset of precursor proteins, maintaining them in a translocation-competent state. It also specifically binds to its receptor SecA. The polypeptide is Protein-export protein SecB (Acinetobacter baylyi (strain ATCC 33305 / BD413 / ADP1)).